The chain runs to 504 residues: D-alanine--D-alanyl carrier protein ligase (504 aa).

Residue 152 to 153 coordinates ATP; that stretch reads TS. Aspartate 197 is a D-alanine binding site. 292–297 lines the ATP pocket; that stretch reads NTYGPT. Valine 301 contributes to the D-alanine binding site. ATP-binding positions include aspartate 383, 394 to 397, and lysine 492; that span reads YNGR. Lysine 492 is a binding site for D-alanine.

This sequence belongs to the ATP-dependent AMP-binding enzyme family. DltA subfamily.

The protein localises to the cytoplasm. The catalysed reaction is holo-[D-alanyl-carrier protein] + D-alanine + ATP = D-alanyl-[D-alanyl-carrier protein] + AMP + diphosphate. It participates in cell wall biogenesis; lipoteichoic acid biosynthesis. Catalyzes the first step in the D-alanylation of lipoteichoic acid (LTA), the activation of D-alanine and its transfer onto the D-alanyl carrier protein (Dcp) DltC. In an ATP-dependent two-step reaction, forms a high energy D-alanyl-AMP intermediate, followed by transfer of the D-alanyl residue as a thiol ester to the phosphopantheinyl prosthetic group of the Dcp. D-alanylation of LTA plays an important role in modulating the properties of the cell wall in Gram-positive bacteria, influencing the net charge of the cell wall. This chain is D-alanine--D-alanyl carrier protein ligase, found in Bacillus cereus (strain ZK / E33L).